Reading from the N-terminus, the 87-residue chain is Small ribosomal subunit protein bS20 (87 aa).

The disordered stretch occupies residues 1 to 25 (MANSAQARKRARQNISHRNRNMSLR). Basic residues predominate over residues 7–20 (ARKRARQNISHRNR).

This sequence belongs to the bacterial ribosomal protein bS20 family.

Its function is as follows. Binds directly to 16S ribosomal RNA. The polypeptide is Small ribosomal subunit protein bS20 (Nitrosospira multiformis (strain ATCC 25196 / NCIMB 11849 / C 71)).